An 80-amino-acid chain; its full sequence is Defensin-like protein 44 (80 aa).

A signal peptide spans 1 to 27 (MAITKTSVTLLLLIIMAASLSNFSVLA). Disulfide bonds link C40–C79, C44–C67, C53–C77, and C57–C78.

It belongs to the DEFL family.

It localises to the secreted. This is Defensin-like protein 44 from Arabidopsis thaliana (Mouse-ear cress).